An 89-amino-acid polypeptide reads, in one-letter code: Neuropeptide S (89 aa).

The N-terminal stretch at 1 to 23 (MIGSLKLSFVLALSLSVMHVLWC) is a signal peptide. The propeptide occupies 24-69 (YPVLSSKVPGKPDYFLILLSSCPARLEGSDRLAFLKPILEKTSMKR).

The protein resides in the secreted. Its function is as follows. May play an important anorexigenic role. Modulates arousal and anxiety as well as increases locomotor activity. Binds to its receptor NPSR1 with nanomolar affinity to increase intracellular calcium concentrations. This Mus musculus (Mouse) protein is Neuropeptide S (Nps).